Here is a 90-residue protein sequence, read N- to C-terminus: Small ribosomal subunit protein uS15 (90 aa).

Belongs to the universal ribosomal protein uS15 family. Part of the 30S ribosomal subunit. Forms a bridge to the 50S subunit in the 70S ribosome, contacting the 23S rRNA.

In terms of biological role, one of the primary rRNA binding proteins, it binds directly to 16S rRNA where it helps nucleate assembly of the platform of the 30S subunit by binding and bridging several RNA helices of the 16S rRNA. Its function is as follows. Forms an intersubunit bridge (bridge B4) with the 23S rRNA of the 50S subunit in the ribosome. This Campylobacter fetus subsp. fetus (strain 82-40) protein is Small ribosomal subunit protein uS15.